Here is a 423-residue protein sequence, read N- to C-terminus: Serine hydroxymethyltransferase (423 aa).

(6S)-5,6,7,8-tetrahydrofolate is bound by residues Leu-125 and 129–131 (GHL). The residue at position 234 (Lys-234) is an N6-(pyridoxal phosphate)lysine. (6S)-5,6,7,8-tetrahydrofolate is bound at residue Glu-249.

It belongs to the SHMT family. As to quaternary structure, homodimer. The cofactor is pyridoxal 5'-phosphate.

It is found in the cytoplasm. The enzyme catalyses (6R)-5,10-methylene-5,6,7,8-tetrahydrofolate + glycine + H2O = (6S)-5,6,7,8-tetrahydrofolate + L-serine. Its pathway is one-carbon metabolism; tetrahydrofolate interconversion. It functions in the pathway amino-acid biosynthesis; glycine biosynthesis; glycine from L-serine: step 1/1. Its function is as follows. Catalyzes the reversible interconversion of serine and glycine with tetrahydrofolate (THF) serving as the one-carbon carrier. This reaction serves as the major source of one-carbon groups required for the biosynthesis of purines, thymidylate, methionine, and other important biomolecules. Also exhibits THF-independent aldolase activity toward beta-hydroxyamino acids, producing glycine and aldehydes, via a retro-aldol mechanism. This Thermobifida fusca (strain YX) protein is Serine hydroxymethyltransferase.